The sequence spans 194 residues: MRLILLGPPGAGKGTQAGLLTKKHGIPQLSTGDMLRAAVAQQSEIGKRAKAVMDAGQLVSDEIVNQIVSERIDAPDCANGFILDGYPRTVPQAQALSQMLSGKGLKLDAVIELKVDENALVKRMESRVAETIAKGGQVRSDDNPEAFRKRLVEYREKTAPLSSYYAGTGELRVINGMAPVEEVTAEIERILVPA.

10–15 (GAGKGT) serves as a coordination point for ATP. The interval 30 to 59 (STGDMLRAAVAQQSEIGKRAKAVMDAGQLV) is NMP. Residues Thr31, Arg36, 57–59 (QLV), 85–88 (GYPR), and Gln92 contribute to the AMP site. The LID stretch occupies residues 126 to 142 (SRVAETIAKGGQVRSDD). Arg127 provides a ligand contact to ATP. AMP-binding residues include Arg139 and Arg150. Ala178 is an ATP binding site.

The protein belongs to the adenylate kinase family. As to quaternary structure, monomer.

Its subcellular location is the cytoplasm. The enzyme catalyses AMP + ATP = 2 ADP. The protein operates within purine metabolism; AMP biosynthesis via salvage pathway; AMP from ADP: step 1/1. Its function is as follows. Catalyzes the reversible transfer of the terminal phosphate group between ATP and AMP. Plays an important role in cellular energy homeostasis and in adenine nucleotide metabolism. This chain is Adenylate kinase, found in Brucella canis (strain ATCC 23365 / NCTC 10854 / RM-666).